Reading from the N-terminus, the 449-residue chain is Cyclin-B1-1 (449 aa).

Disordered stretches follow at residues 1–34 (MATRSQNVAAAPQPPQNRGNVAALGKQKAVVAGR) and 90–143 (AVAP…SVRK). 2 stretches are compositionally biased toward low complexity: residues 90 to 102 (AVAPAAVARPAQR) and 121 to 134 (EISSDSDQSMRQQS).

Belongs to the cyclin family. Cyclin AB subfamily.

The protein is Cyclin-B1-1 (CYCB1-1) of Oryza sativa subsp. japonica (Rice).